A 222-amino-acid polypeptide reads, in one-letter code: Phosphoglycolate phosphatase (222 aa).

Asp-8 acts as the Nucleophile in catalysis. Residues Asp-8 and Asp-10 each coordinate Mg(2+). Substrate is bound at residue Lys-146. Positions 169 and 173 each coordinate Mg(2+).

This sequence belongs to the archaeal SPP-like hydrolase family. Requires Mg(2+) as cofactor.

It catalyses the reaction 2-phosphoglycolate + H2O = glycolate + phosphate. In terms of biological role, catalyzes the dephosphorylation of 2-phosphoglycolate. The chain is Phosphoglycolate phosphatase from Methanothrix thermoacetophila (strain DSM 6194 / JCM 14653 / NBRC 101360 / PT) (Methanosaeta thermophila).